We begin with the raw amino-acid sequence, 201 residues long: ATP-dependent dethiobiotin synthetase BioD (201 aa).

11-16 (DVGKTH) lines the ATP pocket. Mg(2+) is bound at residue Thr15. Lys31 is a catalytic residue. Residues Asp40 and 93–96 (ELAG) each bind ATP. The Mg(2+) site is built by Asp40 and Glu93.

The protein belongs to the dethiobiotin synthetase family. In terms of assembly, homodimer. Requires Mg(2+) as cofactor.

Its subcellular location is the cytoplasm. The enzyme catalyses (7R,8S)-7,8-diammoniononanoate + CO2 + ATP = (4R,5S)-dethiobiotin + ADP + phosphate + 3 H(+). It functions in the pathway cofactor biosynthesis; biotin biosynthesis; biotin from 7,8-diaminononanoate: step 1/2. Functionally, catalyzes a mechanistically unusual reaction, the ATP-dependent insertion of CO2 between the N7 and N8 nitrogen atoms of 7,8-diaminopelargonic acid (DAPA, also called 7,8-diammoniononanoate) to form a ureido ring. The sequence is that of ATP-dependent dethiobiotin synthetase BioD from Campylobacter jejuni subsp. jejuni serotype O:6 (strain 81116 / NCTC 11828).